The chain runs to 385 residues: Basigin (385 aa).

The first 21 residues, 1–21 (MAAALFVLLGFALLGTHGASG), serve as a signal peptide directing secretion. Residues 37–120 (GGSVELHCEA…SNDPDRNHLT (84 aa)) enclose the Ig-like domain. Intrachain disulfides connect cysteine 44–cysteine 108, cysteine 157–cysteine 203, and cysteine 242–cysteine 301. Positions 138–219 (EPGTVFTTVE…MGTANIQLHG (82 aa)) constitute an Ig-like C2-type domain. At 138–323 (EPGTVFTTVE…ITLRVRSHLA (186 aa)) the chain is on the extracellular side. N-linked (GlcNAc...) asparagine glycosylation occurs at asparagine 160. The essential for interaction with KDR/VEGFR2 stretch occupies residues 195–199 (DDQWG). Residues 221–315 (PRVKAVKSSE…SKGSDQAIIT (95 aa)) enclose the Ig-like V-type domain. N-linked (GlcNAc...) asparagine glycans are attached at residues asparagine 268 and asparagine 302. A helical transmembrane segment spans residues 324–344 (ALWPFLGIVAEVLVLVTIIFI). Over 345 to 385 (YEKRRKPEDVLDDDDAGSAPLKSSGQHQNDKGKNVRQRNSS) the chain is Cytoplasmic. The interval 353–385 (DVLDDDDAGSAPLKSSGQHQNDKGKNVRQRNSS) is disordered. Serine 362 and serine 368 each carry phosphoserine.

As to quaternary structure, homooligomer. Interacts with NXNL1. Interacts with SLC2A1 and SLC16A1/GLUT1. Interacts with XKR8; promoting its localization at the cell membrane. (Microbial infection) Interacts with P.falciparum (isolate 3D7) RH5/PfRH5; the interaction is required for the invasion of the host erythrocytes by the parasite at the merozoite stage. In terms of assembly, homooligomer. Forms heterooligomers with isoform 3. Interacts with VEGFA and KDR/VEGFR2. Interacts with PPIA/CYPA. Interacts with PPIL2; regulates BSG transport to the cell membrane. Interacts with SLC16A1; interaction mediates SLC16A3 targeting to the plasma membrane. Interacts with SLC16A12. Interacts with SLC16A11. Interacts with AJAP1. Interacts with SLC1A3, ATP1B2, MAG and L1CAM. Interacts with SLC16A3; interaction mediates SLC16A3 targeting to the plasma membrane. As to quaternary structure, (Microbial infection) Interacts with P.falciparum (isolates 3D7 or 7G8) RH5/PfRH5; the interaction is required for the invasion of the host erythrocytes by the parasite at the merozoite stage. (Microbial infection) Does not interact with severe acute respiratory syndrome coronavirus 2 (SARS-CoV-2) spike glycoprotein, even if previous works were based on a putative interaction. In terms of assembly, forms heterooligomers with isoform 2. As to quaternary structure, interacts with SLC16A6; this interaction mediates targeting to the plasma membrane. Post-translationally, N-glycosylated. As to expression, retina-specific. Expressed in retinal cone photoreceptors (at protein level). In terms of tissue distribution, expressed in erythrocytes (at protein level). Highly expressed in melanoma cell lines (at protein level). Highly expressed in the heart, kidney, skeletal muscle and testis. Highly expressed in the bone marrow, fetal liver, lung, testis and thymus.

It is found in the melanosome. It localises to the cell membrane. Its subcellular location is the photoreceptor inner segment. The protein localises to the cell projection. The protein resides in the cilium. It is found in the photoreceptor outer segment. It localises to the endosome. Its subcellular location is the endoplasmic reticulum membrane. The protein localises to the basolateral cell membrane. In terms of biological role, essential for normal retinal maturation and development. Acts as a retinal cell surface receptor for NXNL1 and plays an important role in NXNL1-mediated survival of retinal cone photoreceptors. In association with glucose transporter SLC16A1/GLUT1 and NXNL1, promotes retinal cone survival by enhancing aerobic glycolysis and accelerating the entry of glucose into photoreceptors. May act as a potent stimulator of IL6 secretion in multiple cell lines that include monocytes. (Microbial infection) Erythrocyte receptor for P.falciparum RH5 which is essential for erythrocyte invasion by the merozoite stage of P.falciparum isolates 3D7 and Dd2. Functionally, signaling receptor for cyclophilins, essential for PPIA/CYPA and PPIB/CYPB-dependent signaling related to chemotaxis and adhesion of immune cells. Plays an important role in targeting monocarboxylate transporters SLC16A1/GLUT1, SLC16A11 and SLC16A12 to the plasma membrane. Acts as a coreceptor for vascular endothelial growth factor receptor 2 (KDR/VEGFR2) in endothelial cells enhancing its VEGFA-mediated activation and downstream signaling. Promotes angiogenesis through EPAS1/HIF2A-mediated up-regulation of VEGFA (isoform VEGF-165 and VEGF-121) and KDR/VEGFR2 in endothelial cells. Plays a key role in regulating tumor growth, invasion, metastasis and neoangiogenesis by stimulating the production and release of extracellular matrix metalloproteinases and KDR/VEGFR2 by both tumor cells and stromal cells (fibroblasts and endothelial cells). Its function is as follows. (Microbial infection) Erythrocyte receptor for P.falciparum RH5 which is essential for erythrocyte invasion by the merozoite stage of P.falciparum isolates 3D7, Dd2, 7G8 and HB3. Binding of P.falciparum RH5 results in BSG dimerization which triggers an increase in intracellular Ca(2+) in the erythrocyte. This essential step leads to a rearrangement of the erythrocyte cytoskeleton required for the merozoite invasion. In terms of biological role, (Microbial infection) Can facilitate human SARS coronavirus (SARS-CoV-1) infection via its interaction with virus-associated PPIA/CYPA. (Microbial infection) Can facilitate HIV-1 infection via its interaction with virus-associated PPIA/CYPA. Functionally, (Microbial infection) First described as a receptor for severe acute respiratory syndrome coronavirus 2 (SARS-CoV-2), it is not required for SARS-CoV-2 infection. Its function is as follows. (Microbial infection) Acts as a receptor for measles virus. In terms of biological role, (Microbial infection) Promotes entry of pentamer-expressing human cytomegalovirus (HCMV) into epithelial and endothelial cells. This is Basigin from Homo sapiens (Human).